Consider the following 403-residue polypeptide: Phosphoglycerate kinase (403 aa).

Residues 24–26, Arg39, 62–65, Arg121, and Arg161 each bind substrate; these read DLN and HLGR. Residues Lys211, Gly299, Glu330, and 359 to 362 contribute to the ATP site; that span reads GGDS.

It belongs to the phosphoglycerate kinase family. In terms of assembly, monomer.

Its subcellular location is the cytoplasm. It catalyses the reaction (2R)-3-phosphoglycerate + ATP = (2R)-3-phospho-glyceroyl phosphate + ADP. The protein operates within carbohydrate degradation; glycolysis; pyruvate from D-glyceraldehyde 3-phosphate: step 2/5. The protein is Phosphoglycerate kinase of Rhodococcus opacus (strain B4).